A 312-amino-acid polypeptide reads, in one-letter code: Aspartate carbamoyltransferase catalytic subunit (312 aa).

Arg-57 and Thr-58 together coordinate carbamoyl phosphate. Lys-85 is a binding site for L-aspartate. Positions 107, 135, and 138 each coordinate carbamoyl phosphate. The L-aspartate site is built by Arg-168 and Arg-222. Carbamoyl phosphate is bound by residues Gly-264 and Pro-265.

Belongs to the aspartate/ornithine carbamoyltransferase superfamily. ATCase family. Heterododecamer (2C3:3R2) of six catalytic PyrB chains organized as two trimers (C3), and six regulatory PyrI chains organized as three dimers (R2).

The catalysed reaction is carbamoyl phosphate + L-aspartate = N-carbamoyl-L-aspartate + phosphate + H(+). The protein operates within pyrimidine metabolism; UMP biosynthesis via de novo pathway; (S)-dihydroorotate from bicarbonate: step 2/3. In terms of biological role, catalyzes the condensation of carbamoyl phosphate and aspartate to form carbamoyl aspartate and inorganic phosphate, the committed step in the de novo pyrimidine nucleotide biosynthesis pathway. In Carboxydothermus hydrogenoformans (strain ATCC BAA-161 / DSM 6008 / Z-2901), this protein is Aspartate carbamoyltransferase catalytic subunit.